Consider the following 1150-residue polypeptide: Pyruvate carboxylase (1150 aa).

Residues 3-455 (QIKKLLVANR…TTKFIEETPE (453 aa)) form the Biotin carboxylation domain. ATP-binding residues include lysine 119, lysine 161, histidine 211, and glutamate 278. Positions 123–319 (RTTAIKADLP…IVKTQILVAA (197 aa)) constitute an ATP-grasp domain. Arginine 294 is an active-site residue. In terms of domain architecture, Pyruvate carboxyltransferase spans 533-802 (VLLTDTTFRD…HLRTDIEGME (270 aa)). Residue 541-545 (RDAHQ) coordinates substrate. Residues aspartate 542, lysine 712, histidine 741, and histidine 743 each contribute to the Mn(2+) site. Lysine 712 is subject to N6-carboxylysine. The 76-residue stretch at 1071–1146 (KADKSNPSHI…ATGDLLIEIE (76 aa)) folds into the Biotinyl-binding domain. Lysine 1112 is subject to N6-biotinyllysine.

In terms of assembly, homotetramer. Biotin is required as a cofactor.

It catalyses the reaction hydrogencarbonate + pyruvate + ATP = oxaloacetate + ADP + phosphate + H(+). In terms of biological role, catalyzes a 2-step reaction, involving the ATP-dependent carboxylation of the covalently attached biotin in the first step and the transfer of the carboxyl group to pyruvate in the second. The chain is Pyruvate carboxylase (pycA) from Staphylococcus aureus (strain Mu50 / ATCC 700699).